Reading from the N-terminus, the 249-residue chain is Triosephosphate isomerase (249 aa).

9–11 is a binding site for substrate; the sequence is NWK. Residue H95 is the Electrophile of the active site. Residue E167 is the Proton acceptor of the active site. Substrate-binding positions include G173, S213, and 234–235; that span reads GG.

It belongs to the triosephosphate isomerase family. As to quaternary structure, homodimer.

It localises to the cytoplasm. The enzyme catalyses D-glyceraldehyde 3-phosphate = dihydroxyacetone phosphate. Its pathway is carbohydrate biosynthesis; gluconeogenesis. It functions in the pathway carbohydrate degradation; glycolysis; D-glyceraldehyde 3-phosphate from glycerone phosphate: step 1/1. Functionally, involved in the gluconeogenesis. Catalyzes stereospecifically the conversion of dihydroxyacetone phosphate (DHAP) to D-glyceraldehyde-3-phosphate (G3P). The sequence is that of Triosephosphate isomerase from Dictyoglomus thermophilum (strain ATCC 35947 / DSM 3960 / H-6-12).